The primary structure comprises 168 residues: uncharacterized protein (168 aa).

Positions 1–15 (MKRIISSSKSLKQLS) are enriched in low complexity. The tract at residues 1-107 (MKRIISSSKS…NNNNNNNNNN (107 aa)) is disordered. Residues 33–47 (SDSDSDSDSDSDSDS) are compositionally biased toward acidic residues. The span at 48 to 107 (DSNSNSNSNSNSNSNSNSNSNSNSNSNNNNNNTNNNNNNNNNNNNNNNNNNNNNNNNNNN) shows a compositional bias: low complexity.

This is an uncharacterized protein from Dictyostelium discoideum (Social amoeba).